Reading from the N-terminus, the 201-residue chain is Regulator of G-protein signaling 1 (201 aa).

The RGS domain maps to 75 to 191 (SLEKLLISED…LKSEIFLRLA (117 aa)).

The protein resides in the cell membrane. It localises to the cytoplasm. Its subcellular location is the cytosol. Regulates G protein-coupled receptor signaling cascades, including signaling downstream of the N-formylpeptide chemoattractant receptors and leukotriene receptors. Inhibits B cell chemotaxis. Inhibits signal transduction by increasing the GTPase activity of G protein alpha subunits, thereby driving them into their inactive GDP-bound form. The sequence is that of Regulator of G-protein signaling 1 (rgs1) from Xenopus tropicalis (Western clawed frog).